Consider the following 135-residue polypeptide: MAENIFLEVVTPGASVVSEEAQIVMAPGSEGEFGVLRGHTTFLTSLKIGSLRYKDAAGKERVLFVNGGFAEVLPTKVTVLAESAERRSQIEVERVRAAKARAEKRISERSVGIDILRAEAALRRAIQRLSVIETR.

It belongs to the ATPase epsilon chain family. In terms of assembly, F-type ATPases have 2 components, CF(1) - the catalytic core - and CF(0) - the membrane proton channel. CF(1) has five subunits: alpha(3), beta(3), gamma(1), delta(1), epsilon(1). CF(0) has three main subunits: a, b and c.

It is found in the cell inner membrane. Its function is as follows. Produces ATP from ADP in the presence of a proton gradient across the membrane. This chain is ATP synthase epsilon chain, found in Desulforapulum autotrophicum (strain ATCC 43914 / DSM 3382 / VKM B-1955 / HRM2) (Desulfobacterium autotrophicum).